The chain runs to 227 residues: PKHD-type hydroxylase Neut_0373 (227 aa).

A Fe2OG dioxygenase domain is found at Lys78–Ser179. 3 residues coordinate Fe cation: His97, Asp99, and His160. Arg170 is a binding site for 2-oxoglutarate.

The cofactor is Fe(2+). It depends on L-ascorbate as a cofactor.

The polypeptide is PKHD-type hydroxylase Neut_0373 (Nitrosomonas eutropha (strain DSM 101675 / C91 / Nm57)).